The primary structure comprises 331 residues: GATA transcription factor 12 (331 aa).

Disordered stretches follow at residues 30 to 49 (ENDVVADSTTTTTITDSSNF) and 105 to 138 (SGFKSRPDPKSDTGSPENPNSSSPIFTTDVSVPA). Low complexity predominate over residues 34–47 (VADSTTTTTITDSS). Over residues 116–134 (DTGSPENPNSSSPIFTTDV) the composition is skewed to polar residues. The Nuclear localization signal motif lies at 139–146 (KARSKRSR). The interval 174-218 (SSQQHLSPPTSPPLLMAPLGKKQAVDGGHRRKKDVSSPESGGAEE) is disordered. Residues 215–269 (GAEERRCLHCATDKTPQWRTGPMGPKTLCNACGVRYKSGRLVPEYRPAASPTFVL) form a GATA-type zinc finger.

It belongs to the type IV zinc-finger family. Class A subfamily. Expressed in the vascular cylinder of roots. Expressed in the differentiation zone of the root stele.

The protein localises to the nucleus. Transcriptional activator that specifically binds 5'-GATA-3' or 5'-GAT-3' motifs within gene promoters. May be involved in the regulation of some light-responsive genes. Transcription activator involved in xylem formation. Functions upstream of NAC030/VND7, a master switch of xylem vessel differentiation. This chain is GATA transcription factor 12, found in Arabidopsis thaliana (Mouse-ear cress).